Here is a 388-residue protein sequence, read N- to C-terminus: Glucose-6-phosphate/phosphate translocator 1, chloroplastic (388 aa).

The transit peptide at 1–65 (MVLSVKQTLS…LRAKSPVVRC (65 aa)) directs the protein to the chloroplast. A run of 8 helical transmembrane segments spans residues 95–115 (LKIGIYFATWWALNVVFNIYN), 129–149 (STLSLAAGSLMMLISWAVGIV), 158–178 (FWKTLFPVAVAHTIGHVAATV), 211–231 (FPTSVYLSLIPIIGGCALSAL), 233–253 (ELNFNMIGFMGAMISNLAFVF), 273–293 (YACLSMLSLLILTPFAIAVEG), 305–325 (LATVGPQFVWWVVAQSVFYHL), and 363–383 (TPVQPVNALGAAIAILGTFLY). In terms of domain architecture, EamA spans 112–229 (NIYNKKVLNA…IPIIGGCALS (118 aa)).

This sequence belongs to the TPT transporter family. GPT (TC 2.A.7.9) subfamily. As to expression, expressed in seeds, flowers, rosette leaves, and roots, with highest levels found in stamens. Found in the root cap, in guard cells and in mesophyll cells.

It localises to the plastid. Its subcellular location is the chloroplast membrane. The protein localises to the endoplasmic reticulum membrane. The protein resides in the peroxisome membrane. In terms of biological role, glucose 6-phosphate (Glc6P) transporter. Also transports inorganic phosphate, 3-phosphoglycerate, triose phosphates and, to a leser extent, phosphoenolpyruvate. Responsible for the transport of Glc6P into plastids of heterotrophic tissues where it can be used as a carbon source for starch biosynthesis, as substrate for fatty acid biosynthesis or as substrate for NADPH generation via the oxidative pentose phosphate pathway (OPPP). Required for pollen maturation and embryo sac development. Preferentially exchanges Glc6P for ribulose-5-phosphate (Ru5P) in reconstituted yeast proteoliposomes. May supply the substrate (Glc6P) for OPPP reactions inside peroxisomes and exchange it with the product Ru5P which leaves the organelle. The polypeptide is Glucose-6-phosphate/phosphate translocator 1, chloroplastic (Arabidopsis thaliana (Mouse-ear cress)).